Here is a 552-residue protein sequence, read N- to C-terminus: Urocanate hydratase (552 aa).

Residues 49 to 50, Gln127, 173 to 175, Asp193, 239 to 240, 260 to 264, 270 to 271, and Tyr319 each bind NAD(+); these read GG, GMG, NA, QTSAH, and YV. Residue Cys407 is part of the active site. Residue Gly489 participates in NAD(+) binding.

The protein belongs to the urocanase family. It depends on NAD(+) as a cofactor.

The protein resides in the cytoplasm. The catalysed reaction is 4-imidazolone-5-propanoate = trans-urocanate + H2O. It participates in amino-acid degradation; L-histidine degradation into L-glutamate; N-formimidoyl-L-glutamate from L-histidine: step 2/3. Its function is as follows. Catalyzes the conversion of urocanate to 4-imidazolone-5-propionate. In Bacillus cytotoxicus (strain DSM 22905 / CIP 110041 / 391-98 / NVH 391-98), this protein is Urocanate hydratase.